The chain runs to 571 residues: Proline--tRNA ligase (571 aa).

It belongs to the class-II aminoacyl-tRNA synthetase family. ProS type 1 subfamily. Homodimer.

Its subcellular location is the cytoplasm. It catalyses the reaction tRNA(Pro) + L-proline + ATP = L-prolyl-tRNA(Pro) + AMP + diphosphate. Catalyzes the attachment of proline to tRNA(Pro) in a two-step reaction: proline is first activated by ATP to form Pro-AMP and then transferred to the acceptor end of tRNA(Pro). As ProRS can inadvertently accommodate and process non-cognate amino acids such as alanine and cysteine, to avoid such errors it has two additional distinct editing activities against alanine. One activity is designated as 'pretransfer' editing and involves the tRNA(Pro)-independent hydrolysis of activated Ala-AMP. The other activity is designated 'posttransfer' editing and involves deacylation of mischarged Ala-tRNA(Pro). The misacylated Cys-tRNA(Pro) is not edited by ProRS. The protein is Proline--tRNA ligase of Haemophilus ducreyi (strain 35000HP / ATCC 700724).